Consider the following 246-residue polypeptide: Ribonuclease PH (246 aa).

Phosphate contacts are provided by residues arginine 91 and 129–131 (GTR).

This sequence belongs to the RNase PH family. Homohexameric ring arranged as a trimer of dimers.

It catalyses the reaction tRNA(n+1) + phosphate = tRNA(n) + a ribonucleoside 5'-diphosphate. Phosphorolytic 3'-5' exoribonuclease that plays an important role in tRNA 3'-end maturation. Removes nucleotide residues following the 3'-CCA terminus of tRNAs; can also add nucleotides to the ends of RNA molecules by using nucleoside diphosphates as substrates, but this may not be physiologically important. Probably plays a role in initiation of 16S rRNA degradation (leading to ribosome degradation) during starvation. This is Ribonuclease PH from Burkholderia ambifaria (strain MC40-6).